Reading from the N-terminus, the 428-residue chain is Adenylosuccinate synthetase (428 aa).

GTP contacts are provided by residues 12–18 and 40–42; these read GDEGKGK and GHT. Asp-13 acts as the Proton acceptor in catalysis. Residues Asp-13 and Gly-40 each contribute to the Mg(2+) site. IMP contacts are provided by residues 13–16, 38–41, Thr-130, Arg-144, Gln-225, Thr-240, and Arg-304; these read DEGK and NAGH. His-41 serves as the catalytic Proton donor. A substrate-binding site is contributed by 300 to 306; sequence VTTGRAR. Residues Arg-306, 332 to 334, and 414 to 416 contribute to the GTP site; these read KID and SVG.

Belongs to the adenylosuccinate synthetase family. As to quaternary structure, homodimer. The cofactor is Mg(2+).

The protein localises to the cytoplasm. The catalysed reaction is IMP + L-aspartate + GTP = N(6)-(1,2-dicarboxyethyl)-AMP + GDP + phosphate + 2 H(+). Its pathway is purine metabolism; AMP biosynthesis via de novo pathway; AMP from IMP: step 1/2. Plays an important role in the de novo pathway of purine nucleotide biosynthesis. Catalyzes the first committed step in the biosynthesis of AMP from IMP. This Clostridium kluyveri (strain ATCC 8527 / DSM 555 / NBRC 12016 / NCIMB 10680 / K1) protein is Adenylosuccinate synthetase.